The following is a 2648-amino-acid chain: E3 ubiquitin-protein ligase hecd-1 (2648 aa).

ANK repeat units lie at residues 374-403 and 405-434; these read VGQS…DVNK and HKSS…NPDL. A compositionally biased stretch (basic and acidic residues) spans 433 to 455; that stretch reads DLRDEDGKTALDKARERSDDDHN. Disordered stretches follow at residues 433–494, 645–714, and 1376–1400; these read DLRD…ELPN, PMEI…KATA, and DPPK…ALPP. Composition is skewed to polar residues over residues 478-489, 652-661, and 670-688; these read ASTSKQPGTSTK, NQPSSSTAVP, and TVPS…NPST. Composition is skewed to low complexity over residues 696-714 and 1383-1400; these read SSTP…KATA and PAGT…ALPP. In terms of domain architecture, MIB/HERC2 spans 1438 to 1510; sequence RSRGSYKISE…NFDIERVTST (73 aa). Disordered stretches follow at residues 1538–1562, 1575–1629, 1652–1796, and 1811–1836; these read YTPK…GSSR, KNTT…SLQH, NQEP…LLGG, and ESLS…GKKP. Composition is skewed to low complexity over residues 1543-1562 and 1575-1586; these read TGGP…GSSR and KNTTPAGTPSSG. The segment covering 1610 to 1629 has biased composition (polar residues); sequence TSGPSVASTGQAASAESLQH. Residues 1653-1666 are compositionally biased toward acidic residues; that stretch reads QEPEDEPMGGEESD. The segment covering 1667 to 1696 has biased composition (low complexity); that stretch reads SAASMRSAASSNSQMSMGSSSQQQQQQDSD. Composition is skewed to acidic residues over residues 1736–1746 and 1756–1783; these read TDGDADADETN and DAME…DESS. The segment covering 1812–1823 has biased composition (low complexity); sequence SLSDASSSAKDA. Residues 2240 to 2648 form the HECT domain; sequence FHADRKAVLE…AINEKGFHLN (409 aa). The active-site Glycyl thioester intermediate is C2617.

This sequence belongs to the UPL family. K-HECT subfamily. In terms of tissue distribution, expressed in most tissues, including hypodermis, muscle, intestine, vulva, and neurons.

It carries out the reaction S-ubiquitinyl-[E2 ubiquitin-conjugating enzyme]-L-cysteine + [acceptor protein]-L-lysine = [E2 ubiquitin-conjugating enzyme]-L-cysteine + N(6)-ubiquitinyl-[acceptor protein]-L-lysine.. The protein operates within protein modification; protein ubiquitination. Its function is as follows. E3 ubiquitin-protein ligase which accepts ubiquitin from an E2 ubiquitin-conjugating enzyme in the form of a thioester and then directly transfers the ubiquitin to targeted substrates. Involved in the ubiquitination and proteasomal-mediated degradation of cytoplasmic and mitochondrial proteins. Positively regulates lin-12 activity in the anchor cell (AC)/vulval precursor (VU) cell fate decision. Negatively regulates glp-1 activity in germline proliferation. May play a role in the formation of fibrous organelles, a hemidesmosome-like structure attaching muscles to the epidermis. Regulates germline DNA double-strand-break repair and apoptosis in response to DNA damage by recruiting E4 ubiquitin-protein ligase ufd-2 to DNA repair foci. In Caenorhabditis elegans, this protein is E3 ubiquitin-protein ligase hecd-1.